A 502-amino-acid polypeptide reads, in one-letter code: High affinity nitrate transporter 2.5 (502 aa).

Helical transmembrane passes span 51-71 (WFQFFCCFVSTFAAPPLLPVI), 87-107 (IASVSGAVFARIVMGTACDLF), 111-131 (LASAALTLSTAPAVYFTAGIK), 133-153 (PIGFIMVRFFAGFSLATFVST), 172-192 (IAAGWGNLGGGATQLIMPIVF), 208-228 (IAFFIPGLFQTLSAFAVLLFG), 264-284 (WITALAYGYCFGVELTIDNII), 300-320 (GIIAASFGLANFFARPGGGIF), 334-354 (LWAWWIVQTSGGVLCACLGQI), 361-381 (IIVMLVFSVFVQAACGLTFGV), 393-413 (VSGMTGAGGNVGAVLTQLIFF), and 423-443 (GITLMGVMSIACSLPICLIYF). The segment at 477 to 502 (LHIGSQKFAETSISERGRATTTHPQT) is disordered.

The protein belongs to the major facilitator superfamily. Nitrate/nitrite porter (TC 2.A.1.8) family. As to quaternary structure, oligomeric molecular complex with NRT3.1. As to expression, expressed in roots, shoots and seeds. Expressed in leaves. Expressed in root hair zone of the primary root and the lateral roots, but not in the lateral root tip or in older parts of the roots. Detected mainly in the epidermis and the cortex. Expressed in shoots only in higher-order veins.

The protein localises to the cell membrane. In terms of biological role, nitrate transporter involved in the constitutive high-affinity transport system (cHATS) under long-term N starvation conditions. Predominantly expressed in roots of nitrate-deprived plants as a 150 kDa molecular complex with NRT3.1 representing the major contributor to cHATS influx. The principal role of this cHATS is to enable roots previously deprived of nitrate to absorb this ion and initiate induction of nitrate-inducible genes. Not involved in transfer of nitrate from roots to shoots. Contributes to phloem loading of nitrate in shoots during N starvation, but not required for growth and nitrate uptake in young plants. Required for the nitrate uptake-independent plant growth promotion and lateral root response to the rhizospheric Phyllobacterium. Might be involved in the transfer of nitrate from stored pools to cytoplasm. This chain is High affinity nitrate transporter 2.5 (NRT2.5), found in Arabidopsis thaliana (Mouse-ear cress).